The following is a 1450-amino-acid chain: MEAGYAEIAAVQFNIAGDNDHKRQGVMEVTISNLFEGTLPAEGGIYDARMGTTDHHYKCITCSHQRKQCMGHPGILQMHAPVLQPLFIAEIRRWLRVICLNCGAPIVDLKRYEHLIRPKRLIEAASSQTEGKQCYVCKTVHPKIIKDSEDYFTFWVDQQGKIDKLYPQIIREIFSRVTYDTVVKLGRSKNSHPEKLVLKAIQIPPISIRPGIRLGIGSGPQSFHDINNVIQYLVRKNLLIPKDLQIVRGQKIPLNIDRNLQTIQQLYYNFLLDSVSTTATQGGTGKRGIVMGARPAPSIMRRLPRKEGRIRKSLLGSQVWSISRSTICGNSDLHLDEVGYPISFARTLQVAETVQHYNINRLMPYFLNGKRQYPGCSRVYKQITQSVHDIEGLKQDFRLEVGDILYRDVVTGDVAFFNRQPSLERSSIGVHRIVVLENPKISTFQMNVSACAWYNADFDGDQMNLWVPWSVMSRVEAELLCSVRNWFISTKSSGPVNGQVQDSTVGSFLLTRTNTPMGKNVMNKLHAMGLFQTTQTDPPCFANYSPTDLLDGKSVVSMLLRQTPINYQRAPTWYSEVYAPYMHYNKQDISTQIRNGELIEGVLDKKAVGAGSSGGIYHLISRRYGPQQALKMIFATQQLALNYVRNAGFTVSTADMLLTPEAHQEVQEIINELLLESEEINNRLLHGDIMPPIGLTTHDFYEKLQLNALKFPDRILKPIMNSINPETNGLFQMVATGAKGSNPNMIHIMAGIGQIEINTQRIQPQFSFGRTLVYYPRFALEAQAYGFICNSYIAGLTSPEFIFGEMNGRFDLINKALSTSSTGYANRKAIFGLQSCIVDYYRRVSIDTRLVQQLYGEDGLDARQLETVRFETIMLSDQELEDKFKYTGIQSPLFEEEFSRLKKDRDKYRQIFLNIENFNFSQLLTDVRQVPVNVASIVKNILLSSATGVLPFDEKTILQKYTMVKTFCKNLPYVFINNIQERLQTPIPVYLKRAASLMRMLIRIELATVKTLNITCEQMSAILDLIRLQYTQSLINYGEAVGILAAQSVSEPLTQYMLDSHHRSVAGGTNKSGIVRPQEIFSAKPVEAEQSSEMLLRLKNPEVETNKTYAQEIANSIELITFERLILQWHLLYETYSSTKKNVMYPDFASDVEWMTDFLENHPLLQPPEDIANWCIRLELNKTTMILKSISLESIINSLRAKHPNTYIMHSVENTASGIPIIIRIYLRESAFRRSTNTRMATDEKIAVNVVDKLLNSTIRGIPGIKNANVVKLMRHRVDAQGKLVRLDNIYAIKTNGTNIFGAMLDDNIDPYTIVSSSIGDTMELYGIEAARQKIISEIRTVMGDKGPNHRHLLMYADLMTRTGQVTSLEKAGLNAREPSNVLLRMALSSPVQVLTDAAVDSAVNPIYGIAAPTLMGSVPRIGTMYSDIIMDEKYITENYKSVDSMIDML.

It belongs to the RNA polymerase beta' chain family. Part of the viral DNA-directed RNA polymerase that consists of 8 polII-like subunits (RPB1, RPB2, RPB3, RPB5, RPB6, RPB7, RPB9, RPB10), a capping enzyme and a termination factor.

Its subcellular location is the virion. It carries out the reaction RNA(n) + a ribonucleoside 5'-triphosphate = RNA(n+1) + diphosphate. In terms of biological role, catalytic component of the DNA-directed RNA polymerase (RNAP) that catalyzes the transcription in the cytoplasm of viral DNA into RNA using the four ribonucleoside triphosphates as substrates. Forms the polymerase active center together with RPB2. Part of the core element with the central large cleft, the clamp element that moves to open and close the cleft and the jaws that are thought to grab the incoming DNA template. The sequence is that of DNA-directed RNA polymerase RPB1 homolog from African swine fever virus (isolate Tick/South Africa/Pretoriuskop Pr4/1996) (ASFV).